We begin with the raw amino-acid sequence, 488 residues long: Ribulose bisphosphate carboxylase large chain (488 aa).

Substrate contacts are provided by Asn-127 and Thr-177. The active-site Proton acceptor is Lys-179. Lys-181 contributes to the substrate binding site. Mg(2+)-binding residues include Lys-205, Asp-207, and Glu-208. Position 205 is an N6-carboxylysine (Lys-205). The active-site Proton acceptor is His-297. Residues Arg-298, His-330, and Ser-382 each contribute to the substrate site.

This sequence belongs to the RuBisCO large chain family. Type I subfamily. In terms of assembly, heterohexadecamer of 8 large chains and 8 small chains. Mg(2+) is required as a cofactor.

The protein resides in the plastid. The protein localises to the chloroplast. The catalysed reaction is 2 (2R)-3-phosphoglycerate + 2 H(+) = D-ribulose 1,5-bisphosphate + CO2 + H2O. It catalyses the reaction D-ribulose 1,5-bisphosphate + O2 = 2-phosphoglycolate + (2R)-3-phosphoglycerate + 2 H(+). In terms of biological role, ruBisCO catalyzes two reactions: the carboxylation of D-ribulose 1,5-bisphosphate, the primary event in carbon dioxide fixation, as well as the oxidative fragmentation of the pentose substrate in the photorespiration process. Both reactions occur simultaneously and in competition at the same active site. In Pyropia suborbiculata (Red alga), this protein is Ribulose bisphosphate carboxylase large chain.